We begin with the raw amino-acid sequence, 511 residues long: Coatomer subunit delta (511 aa).

Residues Gln-168 to Gly-177 are compositionally biased toward basic and acidic residues. The segment at Gln-168–Ser-188 is disordered. A Phosphoserine modification is found at Ser-223. Residues Lys-233 and Lys-241 each carry the N6-acetyllysine modification. The residue at position 244 (Ser-244) is a Phosphoserine. The 241-residue stretch at Met-271–Leu-511 folds into the MHD domain. N6-acetyllysine is present on residues Lys-309 and Lys-351. Ser-493 is subject to Phosphoserine.

The protein belongs to the adaptor complexes medium subunit family. Delta-COP subfamily. As to quaternary structure, oligomeric complex that consists of at least the alpha, beta, beta', gamma, delta, epsilon and zeta subunits. As to expression, ubiquitously expressed.

The protein resides in the cytoplasm. The protein localises to the golgi apparatus membrane. It is found in the cytoplasmic vesicle. It localises to the COPI-coated vesicle membrane. Functionally, component of the coatomer, a cytosolic protein complex that binds to dilysine motifs and reversibly associates with Golgi non-clathrin-coated vesicles, which further mediate biosynthetic protein transport from the ER, via the Golgi up to the trans Golgi network. The coatomer complex is required for budding from Golgi membranes, and is essential for the retrograde Golgi-to-ER transport of dilysine-tagged proteins. In mammals, the coatomer can only be recruited by membranes associated to ADP-ribosylation factors (ARFs), which are small GTP-binding proteins; the complex also influences the Golgi structural integrity, as well as the processing, activity, and endocytic recycling of LDL receptors. In Homo sapiens (Human), this protein is Coatomer subunit delta (ARCN1).